A 504-amino-acid polypeptide reads, in one-letter code: Pyrichalasin C-7 hydroxylase (504 aa).

Residues 1–17 form the signal peptide; that stretch reads MLNSAACIVLAITAVLG. Position 449 (C449) interacts with heme.

It belongs to the cytochrome P450 family. Heme is required as a cofactor.

It participates in mycotoxin biosynthesis. Cytochrome P450 monooxygenase; part of the gene cluster that mediates the biosynthesis of the mycotoxin pyrichalasin H, a tyrosine-derived cytochalasan that inhibits the growth of rice seedlings, but also inhibits lymphocyte capping and actin polymerization and alters cell morphology. Pyrichalasin H is indicated as the responsible agent for the genus-specific pathogenicity of M.grisea toward crabgrass. The first step in the pathway is catalyzed by the O-methyltransferase pyiA which methylates free tyrosine to generate the precursor O-methyltyrosine. The hybrid PKS-NRPS pyiS, assisted by the enoyl reductase pyiC, are responsible for fusion of the O-methyltyrosine precursor and the polyketide backbone. The polyketide synthase module (PKS) of pyiS is responsible for the synthesis of the polyketide backbone and the downstream nonribosomal peptide synthetase (NRPS) amidates the carboxyl end of the polyketide with the O-methyltyrosine precursor. As the NRPS A-domain demonstrates substrate tolerance, pyiS can also use phenylalanine, tyrosine and even para-chlorophenylalanine as amino acid precursor, which leads to the production of novel cytochalasans, including halogenated cytochalasans. Because pyiS lacks a designated enoylreductase (ER) domain, the required activity is provided the enoyl reductase pyiC. Reduction by the hydrolyase pyiE leads to 1,5-dihydropyrrolone, which is substrate for dehydration and intra-molecular Diels-Alder cyclization by the Diels-Alderase pyiF to yield the required isoindolone-fused macrocycle. The tailoring cytochrome P450 monooxygenases piyD and piyG catalyze the hydroxylation at C-18 and C-7, respectivily, whereas the short-chain dehydrogenase/reductase pyiH reduces the carbonyl at C-21 in preparation for the transfer of an acetyl group by the acetyltransferase pyiB. These 3 reactions whose order is not clear yet, lead to the production of O-methylpyrichalasin J, a deacetylated pyrichalasin H. Finally, pyiB to converts O-methylpyrichalasin J into the final product pyrichalasin H via acetylation of C-21. The polypeptide is Pyrichalasin C-7 hydroxylase (Pyricularia grisea (Crabgrass-specific blast fungus)).